Reading from the N-terminus, the 568-residue chain is MQGLIELGLRRLVLCPGSRSGSLATAAGLLASSGQLQLNTAIDERSAAFLALGLATAGGSAVAVVTTSGTAVANLLPAVIEADRSCQPLLVITADRPIRLKACGANQTVNQEDFLRPACRWCGNGAPEGLHAMASHAVLELAALAWSQAHGADQAAAGPVHLNLPVEEPIHAPLQEHQPLLDAVLASDEASLFPLQPSTIQSNRDVPRLDPSRPGVVIAGPWRGLAQDLSAHQQAVRSWLVCSGWPLLADPLSALPVELPGRLHHWDLQLEQLISPEPLQVLRLGPLPASRRLEVWLKRNAGDQVLITEGEPRYMDPLGLATQWSGGLAAWCCAQPLDQASRPLSADHSAWLRRDQALGLWLEEQLVSEGPVSEPALAFQLADLLPPGLPVMLSASSPVRDWLTWSGRSGSDRRCFSFRGASGIDGTLSLAMGLALETGPMLLVTGDLALLHDSNGWLHGQSDGPPLVVLLIDNGGGGIFQQLPIEQASPKRFDALFAMPQRVNPIALAAAHGVPGRSIAVIDDLPEALSWALAQQGPVLLRVCTDRHADAAFRRKLRSAAQNVEPGV.

It belongs to the TPP enzyme family. MenD subfamily. As to quaternary structure, homodimer. Mg(2+) is required as a cofactor. Requires Mn(2+) as cofactor. It depends on thiamine diphosphate as a cofactor.

It catalyses the reaction isochorismate + 2-oxoglutarate + H(+) = 5-enolpyruvoyl-6-hydroxy-2-succinyl-cyclohex-3-ene-1-carboxylate + CO2. The protein operates within quinol/quinone metabolism; 1,4-dihydroxy-2-naphthoate biosynthesis; 1,4-dihydroxy-2-naphthoate from chorismate: step 2/7. It participates in cofactor biosynthesis; phylloquinone biosynthesis. Catalyzes the thiamine diphosphate-dependent decarboxylation of 2-oxoglutarate and the subsequent addition of the resulting succinic semialdehyde-thiamine pyrophosphate anion to isochorismate to yield 2-succinyl-5-enolpyruvyl-6-hydroxy-3-cyclohexene-1-carboxylate (SEPHCHC). This is 2-succinyl-5-enolpyruvyl-6-hydroxy-3-cyclohexene-1-carboxylate synthase from Synechococcus sp. (strain CC9902).